Consider the following 71-residue polypeptide: Conotoxin Bu24 (71 aa).

An N-terminal signal peptide occupies residues 1-21 (MGMRMMVTVFLLVVLATTVVS). Residues 22-44 (LRSNRASDGRRGIVNKLNDLVPK) constitute a propeptide that is removed on maturation. Residue Asn-70 is modified to Asparagine amide.

The protein belongs to the conotoxin A superfamily. In terms of processing, contains 3 disulfide bonds. They are not indicated here, since framework IV presents two different connectivities (I-V, II-III, IV-VI and I-III, II-V, IV-VI). In terms of tissue distribution, expressed by the venom duct.

It is found in the secreted. This is Conotoxin Bu24 from Conus bullatus (Bubble cone).